The following is a 272-amino-acid chain: Deaminated glutathione amidase (272 aa).

The region spanning methionine 1–proline 253 is the CN hydrolase domain. The active-site Proton acceptor is glutamate 43. Residue lysine 115 is the Proton donor of the active site. Cysteine 158 (nucleophile) is an active-site residue.

This sequence belongs to the carbon-nitrogen hydrolase superfamily. NIT1/NIT2 family.

The catalysed reaction is N-(4-oxoglutaryl)-L-cysteinylglycine + H2O = L-cysteinylglycine + 2-oxoglutarate. In terms of biological role, hydrolyzes deaminated glutathione (dGSH, 2-oxoglutaramate) to alpha-ketoglutarate (alpha-KG) and cysteinylglycine (specific activity 7.77 umol/min/mg), hydrolyzes alpha-ketoglutaramate (a-KGM, specific activity 2.13 umol/min/mg), has no activity on glutathione or L-glutamine. May function as a metabolite repair enzyme. The protein is Deaminated glutathione amidase of Synechocystis sp. (strain PCC 6803 / GT-S).